The primary structure comprises 256 residues: Dihydromonacolin L-[lovastatin nonaketide synthase] thioesterase (256 aa).

Catalysis depends on charge relay system residues Ser122, Asp201, and His229.

This sequence belongs to the LovG family.

The catalysed reaction is dihydromonacolin L-[lovastatin nonaketide synthase] + H2O = holo-[lovastatin nonaketide synthase] + dihydromonacolin L carboxylate + H(+). The protein operates within polyketide biosynthesis; lovastatin biosynthesis. Esterase; part of the gene cluster that mediates the biosynthesis of lovastatin (also known as mevinolin, mevacor or monacolin K), a hypolipidemic inhibitor of (3S)-hydroxymethylglutaryl-coenzyme A (HMG-CoA) reductase (HMGR). The first step in the biosynthesis of lovastatin is the production of dihydromonacolin L acid by the lovastatin nonaketide synthase lovB and the trans-acting enoyl reductase lovC via condensation of one acetyl-CoA unit and 8 malonyl-CoA units. Dihydromonacolin L acid is released from lovB by the thioesterase lovG. Next, dihydromonacolin L acid is oxidized by the dihydromonacolin L monooxygenase lovA twice to form monacolin J acid. The 2-methylbutyrate moiety of lovastatin is synthesized by the lovastatin diketide synthase lovF via condensation of one acetyl-CoA unit and one malonyl-CoA unit. Finally, the covalent attachment of this moiety to monacolin J acid is catalyzed by the transesterase lovD to yield lovastatin. LovD has broad substrate specificity and can also convert monacolin J to simvastatin using alpha-dimethylbutanoyl-S-methyl-3-mercaptopropionate (DMB-S-MMP) as the thioester acyl donor, and can also catalyze the reverse reaction and function as hydrolase in vitro. LovD has much higher activity with LovF-bound 2-methylbutanoate than with free diketide substrates. Its function is as follows. Esterase that catalyzes the release of covalently bound dihydromonacolin L from LovB during lovastatin biosynthesis. The polypeptide is Dihydromonacolin L-[lovastatin nonaketide synthase] thioesterase (Aspergillus terreus).